Reading from the N-terminus, the 1710-residue chain is Ankyrin repeat domain-containing protein 26 (1710 aa).

The segment at 1 to 41 (MKKIFSKKGESPLGSFARRQRSSAGGGGEPGEGAYSQPGYH) is disordered. S11 and S15 each carry phosphoserine. 5 ANK repeats span residues 45-75 (RDLG…GLND), 79-108 (MNRT…QLNV), 112-141 (ENRT…DPNL), 145-174 (HGNT…NIEA), and 178-207 (DDLT…NVNA). Residues 222–274 (KEERIPKHSSQNSNSVDESSEDSLSRLSGKPGVDDSWPTSDDEDLNFDTKNVP) form a disordered region. Phosphoserine is present on residues S241, S261, S489, and S530. The tract at residues 504–630 (DSVPNKAGGM…EKRTSKESVN (127 aa)) is disordered. The stretch at 529–566 (ASEEEQEREGSENNQPQVEEERKKHRNNEMEVSANIHD) forms a coiled coil. A compositionally biased stretch (acidic residues) spans 569-580 (TDDAEDDDDDDG). 2 stretches are compositionally biased toward basic and acidic residues: residues 586–602 (KSGE…ENKE) and 613–626 (KEVK…RTSK). The residue at position 631 (S631) is a Phosphoserine. Over residues 650–660 (DSSLSEIDEDE) the composition is skewed to acidic residues. The tract at residues 650–698 (DSSLSEIDEDEGRPTKKTSNEKNKVKNQIQSMDDVDDLTQSSETASEDC) is disordered. A compositionally biased stretch (basic and acidic residues) spans 661 to 673 (GRPTKKTSNEKNK). Coiled coils occupy residues 743 to 873 (KNHC…NARM), 905 to 1472 (EEEK…MVEL), 1517 to 1587 (NNFA…NTKL), and 1649 to 1674 (LSKM…LESG). The segment at 892 to 912 (AQKKMNSENSHSHEEEKDLSH) is disordered.

Interacts with TRIO. Interacts with GPS2. Interacts with CCDC85B. Interacts with HMMR.

In terms of biological role, acts as a regulator of adipogenesis. Involved in the regulation of the feeding behavior. The protein is Ankyrin repeat domain-containing protein 26 of Homo sapiens (Human).